The chain runs to 449 residues: Xylose isomerase (449 aa).

Active-site residues include H103 and D106. The Mg(2+) site is built by E234, E270, H273, D298, D309, D311, and D342.

This sequence belongs to the xylose isomerase family. Homotetramer. Mg(2+) serves as cofactor.

The protein resides in the cytoplasm. It catalyses the reaction alpha-D-xylose = alpha-D-xylulofuranose. The chain is Xylose isomerase from Levilactobacillus brevis (Lactobacillus brevis).